Consider the following 234-residue polypeptide: 1-(5-phosphoribosyl)-5-[(5-phosphoribosylamino)methylideneamino] imidazole-4-carboxamide isomerase (234 aa).

Asp9 serves as the catalytic Proton acceptor. Asp131 (proton donor) is an active-site residue.

It belongs to the HisA/HisF family.

It is found in the cytoplasm. The enzyme catalyses 1-(5-phospho-beta-D-ribosyl)-5-[(5-phospho-beta-D-ribosylamino)methylideneamino]imidazole-4-carboxamide = 5-[(5-phospho-1-deoxy-D-ribulos-1-ylimino)methylamino]-1-(5-phospho-beta-D-ribosyl)imidazole-4-carboxamide. It functions in the pathway amino-acid biosynthesis; L-histidine biosynthesis; L-histidine from 5-phospho-alpha-D-ribose 1-diphosphate: step 4/9. In Staphylococcus aureus (strain JH1), this protein is 1-(5-phosphoribosyl)-5-[(5-phosphoribosylamino)methylideneamino] imidazole-4-carboxamide isomerase.